Consider the following 346-residue polypeptide: B3 domain-containing protein At3g25182 (346 aa).

The interval Lys168–Ala187 is disordered. The TF-B3 DNA-binding region spans Phe237–Ser338.

Its subcellular location is the nucleus. The sequence is that of B3 domain-containing protein At3g25182 from Arabidopsis thaliana (Mouse-ear cress).